Consider the following 415-residue polypeptide: Gamma-glutamyl phosphate reductase (415 aa).

This sequence belongs to the gamma-glutamyl phosphate reductase family.

It localises to the cytoplasm. The enzyme catalyses L-glutamate 5-semialdehyde + phosphate + NADP(+) = L-glutamyl 5-phosphate + NADPH + H(+). It participates in amino-acid biosynthesis; L-proline biosynthesis; L-glutamate 5-semialdehyde from L-glutamate: step 2/2. In terms of biological role, catalyzes the NADPH-dependent reduction of L-glutamate 5-phosphate into L-glutamate 5-semialdehyde and phosphate. The product spontaneously undergoes cyclization to form 1-pyrroline-5-carboxylate. The polypeptide is Gamma-glutamyl phosphate reductase (Mycolicibacterium vanbaalenii (strain DSM 7251 / JCM 13017 / BCRC 16820 / KCTC 9966 / NRRL B-24157 / PYR-1) (Mycobacterium vanbaalenii)).